Here is a 392-residue protein sequence, read N- to C-terminus: 23S rRNA (uracil(747)-C(5))-methyltransferase RlmC (392 aa).

[4Fe-4S] cluster-binding residues include Cys4, Cys12, Cys15, and Cys93. Residues Gln218, Phe247, Glu275, and Asn321 each contribute to the S-adenosyl-L-methionine site. The active-site Nucleophile is the Cys348.

The protein belongs to the class I-like SAM-binding methyltransferase superfamily. RNA M5U methyltransferase family. RlmC subfamily.

The enzyme catalyses uridine(747) in 23S rRNA + S-adenosyl-L-methionine = 5-methyluridine(747) in 23S rRNA + S-adenosyl-L-homocysteine + H(+). Catalyzes the formation of 5-methyl-uridine at position 747 (m5U747) in 23S rRNA. This chain is 23S rRNA (uracil(747)-C(5))-methyltransferase RlmC, found in Haemophilus influenzae (strain PittGG).